The chain runs to 316 residues: MDCEWEGRPQRAGSRASQDPEGLPEARDDGLSESFLLLQMDVEYDPQEKRRPANSAAWSSKNVQRKQRHWERIVSSKKSKRKQERERRKIKRAEDLGNGTCPQHSKRFLKALTKEKLLEAKHSGPRLCVDLSMTQHMSKKELSRLAGQIRRLYGSNKKASRPFWIYLTGFSTDSPLYEECLRMNDGFSAYVLDVTEEDCFSLFPLETLVYLTPDSEHPLEDIDLSTVYIIGGLVDESIQKKVTFQKAQEYSVKTARLPIQEHMIRCQNEKNFHSEILAINQVFDILSAYLETRDWPEALKKGVSPGKGYILQNSVE.

2 disordered regions span residues 1-30 (MDCE…RDDG) and 42-98 (VEYD…DLGN). A compositionally biased stretch (basic residues) spans 63–82 (VQRKQRHWERIVSSKKSKRK). A coiled-coil region spans residues 75-96 (SSKKSKRKQERERRKIKRAEDL). A compositionally biased stretch (basic and acidic residues) spans 83 to 95 (QERERRKIKRAED). One can recognise an SAM-dependent MTase TRM10-type domain in the interval 113 to 310 (TKEKLLEAKH…KGVSPGKGYI (198 aa)).

The protein belongs to the class IV-like SAM-binding methyltransferase superfamily. TRM10 family.

It carries out the reaction guanosine(9) in tRNA + S-adenosyl-L-methionine = N(1)-methylguanosine(9) in tRNA + S-adenosyl-L-homocysteine + H(+). In terms of biological role, S-adenosyl-L-methionine-dependent guanine N(1)-methyltransferase that catalyzes the formation of N(1)-methylguanine at position 9 (m1G9) in tRNAs. Probably not able to catalyze formation of N(1)-methyladenine at position 9 (m1A9) in tRNAs. The sequence is that of tRNA methyltransferase 10 homolog B (Trmt10b) from Rattus norvegicus (Rat).